Reading from the N-terminus, the 185-residue chain is Crossover junction endodeoxyribonuclease RuvC (185 aa).

Residues Asp-7, Glu-68, and Asp-141 contribute to the active site. Mg(2+) is bound by residues Asp-7, Glu-68, and Asp-141.

It belongs to the RuvC family. Homodimer which binds Holliday junction (HJ) DNA. The HJ becomes 2-fold symmetrical on binding to RuvC with unstacked arms; it has a different conformation from HJ DNA in complex with RuvA. In the full resolvosome a probable DNA-RuvA(4)-RuvB(12)-RuvC(2) complex forms which resolves the HJ. Mg(2+) is required as a cofactor.

It localises to the cytoplasm. The enzyme catalyses Endonucleolytic cleavage at a junction such as a reciprocal single-stranded crossover between two homologous DNA duplexes (Holliday junction).. The RuvA-RuvB-RuvC complex processes Holliday junction (HJ) DNA during genetic recombination and DNA repair. Endonuclease that resolves HJ intermediates. Cleaves cruciform DNA by making single-stranded nicks across the HJ at symmetrical positions within the homologous arms, yielding a 5'-phosphate and a 3'-hydroxyl group; requires a central core of homology in the junction. The consensus cleavage sequence is 5'-(A/T)TT(C/G)-3'. Cleavage occurs on the 3'-side of the TT dinucleotide at the point of strand exchange. HJ branch migration catalyzed by RuvA-RuvB allows RuvC to scan DNA until it finds its consensus sequence, where it cleaves and resolves the cruciform DNA. This Mycolicibacterium smegmatis (strain ATCC 700084 / mc(2)155) (Mycobacterium smegmatis) protein is Crossover junction endodeoxyribonuclease RuvC.